We begin with the raw amino-acid sequence, 487 residues long: L-tartrate/succinate antiporter (487 aa).

The next 14 helical transmembrane spans lie at 10–30 (YLAP…AGLE), 33–53 (TWLY…EPVP), 54–74 (GAVV…WLLF), 93–113 (WAVS…FMFG), 137–157 (TLFL…VTPS), 189–209 (IGSY…AIFL), 236–256 (FLGM…LAYV), 292–312 (LMVG…AAMV), 313–333 (GYSV…DIVS), 340–360 (VFFW…TGFI), 370–390 (SLSG…FYLL), 393–413 (FFAS…AAAL), 418–438 (IPLP…SILT), and 465–485 (IFGL…MPVV).

It belongs to the SLC13A/DASS transporter (TC 2.A.47) family. DIT1 subfamily.

The protein localises to the cell inner membrane. The enzyme catalyses (2R,3R)-tartrate(out) + succinate(in) = (2R,3R)-tartrate(in) + succinate(out). Its function is as follows. Catalyzes the uptake of tartrate in exchange for intracellular succinate. Essential for anaerobic L-tartrate fermentation. The polypeptide is L-tartrate/succinate antiporter (ttdT) (Escherichia coli O157:H7).